A 161-amino-acid chain; its full sequence is UPF0262 protein SPOA0072 (161 aa).

The interval 1 to 21 (MTMSRISHIELDDSNLPPPTP) is disordered.

This sequence belongs to the UPF0262 family.

The sequence is that of UPF0262 protein SPOA0072 from Ruegeria pomeroyi (strain ATCC 700808 / DSM 15171 / DSS-3) (Silicibacter pomeroyi).